The primary structure comprises 407 residues: Substance-P receptor (407 aa).

Residues M1 to Q31 lie on the Extracellular side of the membrane. Residues N14 and N18 are each glycosylated (N-linked (GlcNAc...) asparagine). The chain crosses the membrane as a helical span at residues I32 to M54. Residues W55 to R64 lie on the Cytoplasmic side of the membrane. The chain crosses the membrane as a helical span at residues T65 to T86. Over V87–K106 the chain is Extracellular. N89 is a glycosylation site (N-linked (GlcNAc...) asparagine). C105 and C180 are disulfide-bonded. Residues F107–F128 traverse the membrane as a helical segment. The Cytoplasmic portion of the chain corresponds to D129–K148. A helical membrane pass occupies residues V149–S169. Residues T170–K194 lie on the Extracellular side of the membrane. An N-linked (GlcNAc...) asparagine glycan is attached at N189. The helical transmembrane segment at A195–V219 threads the bilayer. Over G220–K248 the chain is Cytoplasmic. Residues M249–L270 form a helical membrane-spanning segment. Residues P271 to I283 are Extracellular-facing. A helical membrane pass occupies residues Q284–L308. Residues N309–A407 are Cytoplasmic-facing. C322 carries the S-palmitoyl cysteine lipid modification. The interval H365–A407 is disordered. Over residues T376–A407 the composition is skewed to polar residues.

The protein belongs to the G-protein coupled receptor 1 family. As to quaternary structure, interacts with ARRB1.

It is found in the cell membrane. In terms of biological role, this is a receptor for the tachykinin neuropeptide substance P. It is probably associated with G proteins that activate a phosphatidylinositol-calcium second messenger system. In Meriones unguiculatus (Mongolian jird), this protein is Substance-P receptor (TACR1).